The following is a 457-amino-acid chain: Multidrug resistance protein MdtK (457 aa).

A run of 12 helical transmembrane segments spans residues leucine 11–valine 31, isoleucine 53–alanine 73, tryptophan 93–isoleucine 113, alanine 127–alanine 147, glycine 160–tyrosine 180, glycine 189–valine 209, leucine 243–valine 263, isoleucine 276–threonine 296, alanine 314–valine 334, valine 350–isoleucine 370, isoleucine 387–alanine 407, and proline 418–leucine 438.

The protein belongs to the multi antimicrobial extrusion (MATE) (TC 2.A.66.1) family. MdtK subfamily.

The protein localises to the cell inner membrane. Functionally, multidrug efflux pump that functions probably as a Na(+)/drug antiporter. The polypeptide is Multidrug resistance protein MdtK (Escherichia coli O9:H4 (strain HS)).